The sequence spans 330 residues: Diacylglycerol acyltransferase/mycolyltransferase Ag85B (330 aa).

A signal peptide spans methionine 1–alanine 40. Leucine 82 to arginine 83 contacts substrate. The fibronectin-binding stretch occupies residues phenylalanine 98 to valine 108. A disulfide bond links cysteine 127 and cysteine 132. Residues serine 166 and aspartate 194 each contribute to the substrate site. Residue serine 166 is the Nucleophile of the active site. Residue glutamate 270 is part of the active site. Residues phenylalanine 272–serine 275, lysine 279, and histidine 302–tryptophan 304 each bind substrate. Histidine 302 is a catalytic residue.

It belongs to the mycobacterial A85 antigen family.

It localises to the secreted. The catalysed reaction is 2 alpha,alpha'-trehalose 6-mycolate = alpha,alpha'-trehalose 6,6'-bismycolate + alpha,alpha-trehalose. The enzyme catalyses an acyl-CoA + a 1,2-diacyl-sn-glycerol = a triacyl-sn-glycerol + CoA. Its function is as follows. The antigen 85 proteins (FbpA, FbpB, FbpC) are responsible for the high affinity of mycobacteria for fibronectin, a large adhesive glycoprotein, which facilitates the attachment of M.tuberculosis to murine alveolar macrophages (AMs). They also help to maintain the integrity of the cell wall by catalyzing the transfer of mycolic acids to cell wall arabinogalactan and through the synthesis of alpha,alpha-trehalose dimycolate (TDM, cord factor). They catalyze the transfer of a mycoloyl residue from one molecule of alpha,alpha-trehalose monomycolate (TMM) to another TMM, leading to the formation of TDM. This Mycobacterium intracellulare (strain ATCC 13950 / DSM 43223 / JCM 6384 / NCTC 13025 / 3600) protein is Diacylglycerol acyltransferase/mycolyltransferase Ag85B (fbpB).